A 383-amino-acid polypeptide reads, in one-letter code: tRNA-specific 2-thiouridylase MnmA (383 aa).

ATP is bound by residues 9–16 and methionine 35; that span reads GMSGGVDS. The tract at residues 95–97 is interaction with target base in tRNA; the sequence is NPD. Residue cysteine 100 is the Nucleophile of the active site. The cysteines at positions 100 and 196 are disulfide-linked. Glycine 124 contacts ATP. The interval 146–148 is interaction with tRNA; that stretch reads KDQ. The Cysteine persulfide intermediate role is filled by cysteine 196. The segment at 308–309 is interaction with tRNA; that stretch reads RY.

This sequence belongs to the MnmA/TRMU family.

It localises to the cytoplasm. The enzyme catalyses S-sulfanyl-L-cysteinyl-[protein] + uridine(34) in tRNA + AH2 + ATP = 2-thiouridine(34) in tRNA + L-cysteinyl-[protein] + A + AMP + diphosphate + H(+). Its function is as follows. Catalyzes the 2-thiolation of uridine at the wobble position (U34) of tRNA, leading to the formation of s(2)U34. This Burkholderia lata (strain ATCC 17760 / DSM 23089 / LMG 22485 / NCIMB 9086 / R18194 / 383) protein is tRNA-specific 2-thiouridylase MnmA.